We begin with the raw amino-acid sequence, 239 residues long: Octanoyltransferase (239 aa).

Residues D48 to T236 form the BPL/LPL catalytic domain. Residues R87–H94, A167–G169, and G180–S182 each bind substrate. Residue C198 is the Acyl-thioester intermediate of the active site.

This sequence belongs to the LipB family.

It is found in the cytoplasm. The enzyme catalyses octanoyl-[ACP] + L-lysyl-[protein] = N(6)-octanoyl-L-lysyl-[protein] + holo-[ACP] + H(+). The protein operates within protein modification; protein lipoylation via endogenous pathway; protein N(6)-(lipoyl)lysine from octanoyl-[acyl-carrier-protein]: step 1/2. Its function is as follows. Catalyzes the transfer of endogenously produced octanoic acid from octanoyl-acyl-carrier-protein onto the lipoyl domains of lipoate-dependent enzymes. Lipoyl-ACP can also act as a substrate although octanoyl-ACP is likely to be the physiological substrate. In Rhizobium johnstonii (strain DSM 114642 / LMG 32736 / 3841) (Rhizobium leguminosarum bv. viciae), this protein is Octanoyltransferase.